The chain runs to 387 residues: MAPPAGGAAAAASDLGSAAVLLAVHAAVRPLGAGPDAEAQLRRLQLSADPERPGRFRLELLGAGPGAVNLEWPLESVSYTIRGPTQHELQPPPGGPGTLSLHFLNPQEAQRWAVLVRGATVEGQNGSKSNSPPALGPEACPVSLPSPPEASTLKGPPPEADLPRSPGNLTEREELAGSLARAIAGGDEKGAAQVAAVLAQHRVALSVQLQEACFPPGPIRLQVTLEDAASAASAASSAHVALQVHPHCTVAALQEQVFSELGFPPAVQRWVIGRCLCVPERSLASYGVRQDGDPAFLYLLSAPREAPATGPSPQHPQKMDGELGRLFPPSLGLPPGPQPAASSLPSPLQPSWSCPSCTFINAPDRPGCEMCSTQRPCTWDPLAAAST.

The self-association stretch occupies residues 1-180 (MAPPAGGAAA…EREELAGSLA (180 aa)). The span at 122–132 (EGQNGSKSNSP) shows a compositional bias: polar residues. The interval 122–169 (EGQNGSKSNSPPALGPEACPVSLPSPPEASTLKGPPPEADLPRSPGNL) is disordered. A Phosphoserine modification is found at Ser165. Residues 175–310 (LAGSLARAIA…SAPREAPATG (136 aa)) form an interaction with SHANK1 region. The 70-residue stretch at 219–288 (IRLQVTLEDA…PERSLASYGV (70 aa)) folds into the Ubiquitin-like domain. Positions 305-349 (EAPATGPSPQHPQKMDGELGRLFPPSLGLPPGPQPAASSLPSPLQ) are disordered. A Phosphoserine modification is found at Ser312. The segment covering 339–349 (PAASSLPSPLQ) has biased composition (low complexity). The RanBP2-type zinc finger occupies 348 to 377 (LQPSWSCPSCTFINAPDRPGCEMCSTQRPC).

In terms of assembly, monomer and homodimer. Component of the LUBAC complex (linear ubiquitin chain assembly complex) which consists of SHARPIN, RBCK1 and RNF31. LUBAC has a MW of approximately 600 kDa suggesting a heteromultimeric assembly of its subunits. Associates with the TNF-R1 signaling complex (TNF-RSC) in a stimulation-dependent manner. Interacts with EYA1, EYA2, SHANK1 and SHANK3 (via ANK repeats). As to expression, highly expressed in skeletal muscle and placenta and at lower levels in brain, heart, colon without mucosa, thymus, spleen, kidney, liver, small intestine, lung and peripheral blood leukocytes. Up-regulated in various tumor tissues such as kidney, liver, ovary and pancreas tumors.

The protein resides in the cytoplasm. The protein localises to the cytosol. It localises to the synapse. It functions in the pathway protein modification; protein ubiquitination. Its function is as follows. Component of the LUBAC complex which conjugates linear polyubiquitin chains in a head-to-tail manner to substrates and plays a key role in NF-kappa-B activation and regulation of inflammation. LUBAC conjugates linear polyubiquitin to IKBKG and RIPK1 and is involved in activation of the canonical NF-kappa-B and the JNK signaling pathways. Linear ubiquitination mediated by the LUBAC complex interferes with TNF-induced cell death and thereby prevents inflammation. LUBAC is recruited to the TNF-R1 signaling complex (TNF-RSC) following polyubiquitination of TNF-RSC components by BIRC2 and/or BIRC3 and to conjugate linear polyubiquitin to IKBKG and possibly other components contributing to the stability of the complex. The LUBAC complex is also involved in innate immunity by conjugating linear polyubiquitin chains at the surface of bacteria invading the cytosol to form the ubiquitin coat surrounding bacteria. LUBAC is not able to initiate formation of the bacterial ubiquitin coat, and can only promote formation of linear polyubiquitins on pre-existing ubiquitin. The bacterial ubiquitin coat acts as an 'eat-me' signal for xenophagy and promotes NF-kappa-B activation. Together with OTULIN, the LUBAC complex regulates the canonical Wnt signaling during angiogenesis. The protein is Sharpin of Homo sapiens (Human).